The following is an 89-amino-acid chain: Small ribosomal subunit protein uS14 (89 aa).

This sequence belongs to the universal ribosomal protein uS14 family. As to quaternary structure, part of the 30S ribosomal subunit. Contacts proteins S3 and S10.

Functionally, binds 16S rRNA, required for the assembly of 30S particles and may also be responsible for determining the conformation of the 16S rRNA at the A site. The protein is Small ribosomal subunit protein uS14 of Deinococcus radiodurans (strain ATCC 13939 / DSM 20539 / JCM 16871 / CCUG 27074 / LMG 4051 / NBRC 15346 / NCIMB 9279 / VKM B-1422 / R1).